We begin with the raw amino-acid sequence, 121 residues long: MQNRIEIAEATLKEDRLILTTKSEEQIQKAKASGQMLVDSDHFAFVYILENEESFSYLILGEDTWAPLKEAMTLDIPVYLAAEGHSLELIQLHQELHYLIDNIKDNANYGDMEEKVKSTFL.

This sequence belongs to the UPF0738 family.

The chain is UPF0738 protein BPUM_1088 from Bacillus pumilus (strain SAFR-032).